The following is a 428-amino-acid chain: Dual-specificity RNA methyltransferase RlmN (428 aa).

The segment covering Met-1 to Gly-17 has biased composition (basic and acidic residues). The interval Met-1–Asn-44 is disordered. The span at Lys-18–Thr-33 shows a compositional bias: polar residues. Residue Glu-136 is the Proton acceptor of the active site. Residues Glu-142–Asp-381 enclose the Radical SAM core domain. Residues Cys-149 and Cys-386 are joined by a disulfide bond. Cys-156, Cys-160, and Cys-163 together coordinate [4Fe-4S] cluster. S-adenosyl-L-methionine contacts are provided by residues Gly-212–Glu-213, Ser-244, Ser-266–His-268, and Asn-343. Cys-386 (S-methylcysteine intermediate) is an active-site residue.

This sequence belongs to the radical SAM superfamily. RlmN family. Requires [4Fe-4S] cluster as cofactor.

It is found in the cytoplasm. The catalysed reaction is adenosine(2503) in 23S rRNA + 2 reduced [2Fe-2S]-[ferredoxin] + 2 S-adenosyl-L-methionine = 2-methyladenosine(2503) in 23S rRNA + 5'-deoxyadenosine + L-methionine + 2 oxidized [2Fe-2S]-[ferredoxin] + S-adenosyl-L-homocysteine. The enzyme catalyses adenosine(37) in tRNA + 2 reduced [2Fe-2S]-[ferredoxin] + 2 S-adenosyl-L-methionine = 2-methyladenosine(37) in tRNA + 5'-deoxyadenosine + L-methionine + 2 oxidized [2Fe-2S]-[ferredoxin] + S-adenosyl-L-homocysteine. Its function is as follows. Specifically methylates position 2 of adenine 2503 in 23S rRNA and position 2 of adenine 37 in tRNAs. m2A2503 modification seems to play a crucial role in the proofreading step occurring at the peptidyl transferase center and thus would serve to optimize ribosomal fidelity. In Rhodospirillum rubrum (strain ATCC 11170 / ATH 1.1.1 / DSM 467 / LMG 4362 / NCIMB 8255 / S1), this protein is Dual-specificity RNA methyltransferase RlmN.